Here is a 115-residue protein sequence, read N- to C-terminus: NADH-ubiquinone oxidoreductase chain 3 (115 aa).

3 helical membrane-spanning segments follow: residues 3 to 23, 55 to 75, and 86 to 106; these read LLII…IAFW, FFLV…LLPL, and TMMA…SYEW.

This sequence belongs to the complex I subunit 3 family. Core subunit of respiratory chain NADH dehydrogenase (Complex I) which is composed of 45 different subunits. Interacts with TMEM186. Interacts with TMEM242.

Its subcellular location is the mitochondrion inner membrane. It catalyses the reaction a ubiquinone + NADH + 5 H(+)(in) = a ubiquinol + NAD(+) + 4 H(+)(out). In terms of biological role, core subunit of the mitochondrial membrane respiratory chain NADH dehydrogenase (Complex I) which catalyzes electron transfer from NADH through the respiratory chain, using ubiquinone as an electron acceptor. Essential for the catalytic activity of complex I. The protein is NADH-ubiquinone oxidoreductase chain 3 of Rattus norvegicus (Rat).